The following is a 215-amino-acid chain: Phosphoserine phosphatase (215 aa).

D11 acts as the Nucleophile in catalysis. Mg(2+) contacts are provided by D11 and D13. D13 functions as the Proton donor in the catalytic mechanism. Substrate is bound by residues E20, R56, 99–100 (SG), and K144. D167 serves as a coordination point for Mg(2+). N170 lines the substrate pocket.

The protein belongs to the HAD-like hydrolase superfamily. SerB family. Requires Mg(2+) as cofactor.

The enzyme catalyses O-phospho-L-serine + H2O = L-serine + phosphate. The catalysed reaction is O-phospho-D-serine + H2O = D-serine + phosphate. It participates in amino-acid biosynthesis; L-serine biosynthesis; L-serine from 3-phospho-D-glycerate: step 3/3. This chain is Phosphoserine phosphatase, found in Streptococcus thermophilus (strain ATCC BAA-250 / LMG 18311).